We begin with the raw amino-acid sequence, 143 residues long: Antitumor antibiotic C-1027 apoprotein (143 aa).

Positions 1-33 (MSLRHMSRRASRFGVVAVASIGLAAAAQSVAFA) are cleaved as a signal peptide. Cystine bridges form between C69–C78 and C119–C124.

It belongs to the neocarzinostatin family.

Binds non-covalently to a chromophore which is the cytotoxic and mutagenic component of the antibiotic. The chromophore binds to DNA as a weak intercalator and causes single- and double-strand breaks. The protein is Antitumor antibiotic C-1027 apoprotein (cagA) of Streptomyces globisporus.